We begin with the raw amino-acid sequence, 92 residues long: Small ribosomal subunit protein uS19 (92 aa).

This sequence belongs to the universal ribosomal protein uS19 family.

In terms of biological role, protein S19 forms a complex with S13 that binds strongly to the 16S ribosomal RNA. The protein is Small ribosomal subunit protein uS19 of Nostoc punctiforme (strain ATCC 29133 / PCC 73102).